The sequence spans 277 residues: Shikimate dehydrogenase (NADP(+)) (277 aa).

Shikimate contacts are provided by residues 18 to 20 (SKS) and threonine 65. Lysine 69 acts as the Proton acceptor in catalysis. Glutamate 81 is a binding site for NADP(+). 2 residues coordinate shikimate: asparagine 90 and aspartate 106. NADP(+) is bound by residues 130-134 (GAGGA), 154-159 (NRTFSK), and methionine 217. Tyrosine 219 is a binding site for shikimate. Glycine 241 is an NADP(+) binding site.

The protein belongs to the shikimate dehydrogenase family. As to quaternary structure, homodimer.

It catalyses the reaction shikimate + NADP(+) = 3-dehydroshikimate + NADPH + H(+). Its pathway is metabolic intermediate biosynthesis; chorismate biosynthesis; chorismate from D-erythrose 4-phosphate and phosphoenolpyruvate: step 4/7. Its function is as follows. Involved in the biosynthesis of the chorismate, which leads to the biosynthesis of aromatic amino acids. Catalyzes the reversible NADPH linked reduction of 3-dehydroshikimate (DHSA) to yield shikimate (SA). The polypeptide is Shikimate dehydrogenase (NADP(+)) (Vibrio parahaemolyticus serotype O3:K6 (strain RIMD 2210633)).